A 407-amino-acid polypeptide reads, in one-letter code: D-mannose isomerase (407 aa).

Residues His251 and His383 each act as proton donor/acceptor in the active site.

It belongs to the N-acylglucosamine 2-epimerase family. As to quaternary structure, homodimer.

It catalyses the reaction D-mannose = D-fructose. The catalysed reaction is D-lyxose = D-xylulose. Its activity is regulated as follows. Significantly inhibited by divalent metal ions such as Cu(2+), Cd(2+) or Ca(2+). In terms of biological role, catalyzes the reversible isomerization of D-mannose to D-fructose. Shows weaker activity on D-lyxose, but cannot use N-acetyl D-glucosamine. This Thermobifida fusca (Thermomonospora fusca) protein is D-mannose isomerase.